The chain runs to 409 residues: Tryptophan synthase beta chain (409 aa).

Lysine 95 carries the N6-(pyridoxal phosphate)lysine modification.

This sequence belongs to the TrpB family. In terms of assembly, tetramer of two alpha and two beta chains. Pyridoxal 5'-phosphate serves as cofactor.

The enzyme catalyses (1S,2R)-1-C-(indol-3-yl)glycerol 3-phosphate + L-serine = D-glyceraldehyde 3-phosphate + L-tryptophan + H2O. It functions in the pathway amino-acid biosynthesis; L-tryptophan biosynthesis; L-tryptophan from chorismate: step 5/5. In terms of biological role, the beta subunit is responsible for the synthesis of L-tryptophan from indole and L-serine. In Pseudomonas savastanoi pv. phaseolicola (Pseudomonas syringae pv. phaseolicola), this protein is Tryptophan synthase beta chain.